The sequence spans 223 residues: Deoxyribose-phosphate aldolase (223 aa).

The Proton donor/acceptor role is filled by Asp89. Lys152 (schiff-base intermediate with acetaldehyde) is an active-site residue. Lys181 functions as the Proton donor/acceptor in the catalytic mechanism.

Belongs to the DeoC/FbaB aldolase family. DeoC type 1 subfamily.

The protein localises to the cytoplasm. The enzyme catalyses 2-deoxy-D-ribose 5-phosphate = D-glyceraldehyde 3-phosphate + acetaldehyde. Its pathway is carbohydrate degradation; 2-deoxy-D-ribose 1-phosphate degradation; D-glyceraldehyde 3-phosphate and acetaldehyde from 2-deoxy-alpha-D-ribose 1-phosphate: step 2/2. In terms of biological role, catalyzes a reversible aldol reaction between acetaldehyde and D-glyceraldehyde 3-phosphate to generate 2-deoxy-D-ribose 5-phosphate. In Listeria welshimeri serovar 6b (strain ATCC 35897 / DSM 20650 / CCUG 15529 / CIP 8149 / NCTC 11857 / SLCC 5334 / V8), this protein is Deoxyribose-phosphate aldolase.